A 606-amino-acid polypeptide reads, in one-letter code: NADH-ubiquinone oxidoreductase chain 5 (606 aa).

16 consecutive transmembrane segments (helical) span residues 4–24 (FSSLTLVTLILLTMPIAAINF), 43–63 (AFITSMIPTMMFIHTGQEMII), 84–104 (FFSMMFVPVALFVTWSIMEFS), 114–134 (INQFFKYLLLFLITMLILVTA), 140–160 (LFIGWEGVGIMSFLLIGWWYG), 171–191 (AILYNRIGDIGFILAMAWFLI), 213–233 (LMGLILAATGKSAQFGLHPWL), 241–261 (TPVSALLHSSTMVVAGIFLLI), 272–292 (FGQSIMLCLGAMTTLFTAMCA), 301–320 (IIAFSTSSQLGLMMVTIGIN), 325–347 (AFLHICTHAFFKAMLFMCSGSII), 366–386 (MPFTTTALIIGSLALTGMPFL), 413–433 (LVATSFTAIYSTRIIFFALLG), 457–477 (LLIGSLFAGFIISNNIPPMTI), 485–505 (YLKMTALTVTILGFILALEIS), and 582–602 (GLIKLYFLSFLITILISTTLL).

This sequence belongs to the complex I subunit 5 family. In terms of assembly, core subunit of respiratory chain NADH dehydrogenase (Complex I) which is composed of 45 different subunits.

The protein localises to the mitochondrion inner membrane. The enzyme catalyses a ubiquinone + NADH + 5 H(+)(in) = a ubiquinol + NAD(+) + 4 H(+)(out). Functionally, core subunit of the mitochondrial membrane respiratory chain NADH dehydrogenase (Complex I) which catalyzes electron transfer from NADH through the respiratory chain, using ubiquinone as an electron acceptor. Essential for the catalytic activity and assembly of complex I. This is NADH-ubiquinone oxidoreductase chain 5 (MT-ND5) from Ovis aries (Sheep).